Reading from the N-terminus, the 505-residue chain is ATP synthase subunit alpha, chloroplastic (505 aa).

170-177 is an ATP binding site; it reads GDRQTGKT.

Belongs to the ATPase alpha/beta chains family. In terms of assembly, F-type ATPases have 2 components, CF(1) - the catalytic core - and CF(0) - the membrane proton channel. CF(1) has five subunits: alpha(3), beta(3), gamma(1), delta(1), epsilon(1). CF(0) has four main subunits: a, b, b' and c.

It is found in the plastid. The protein resides in the chloroplast thylakoid membrane. The catalysed reaction is ATP + H2O + 4 H(+)(in) = ADP + phosphate + 5 H(+)(out). Functionally, produces ATP from ADP in the presence of a proton gradient across the membrane. The alpha chain is a regulatory subunit. The protein is ATP synthase subunit alpha, chloroplastic of Oenothera elata subsp. hookeri (Hooker's evening primrose).